We begin with the raw amino-acid sequence, 575 residues long: Suppressor of tumorigenicity 7 protein-like (575 aa).

A run of 2 helical transmembrane segments spans residues 36-56 (GLAG…LYAL) and 80-100 (FYVA…IFEW). Residues 125–147 (GTESSISEPGSPSRNRENETSRQ) form a disordered region. The span at 126–137 (TESSISEPGSPS) shows a compositional bias: polar residues.

It belongs to the ST7 family.

The protein localises to the membrane. This Homo sapiens (Human) protein is Suppressor of tumorigenicity 7 protein-like (ST7L).